A 264-amino-acid polypeptide reads, in one-letter code: tRNA pseudouridine synthase A (264 aa).

D51 functions as the Nucleophile in the catalytic mechanism. Substrate is bound at residue Y109.

It belongs to the tRNA pseudouridine synthase TruA family. As to quaternary structure, homodimer.

It carries out the reaction uridine(38/39/40) in tRNA = pseudouridine(38/39/40) in tRNA. In terms of biological role, formation of pseudouridine at positions 38, 39 and 40 in the anticodon stem and loop of transfer RNAs. The sequence is that of tRNA pseudouridine synthase A from Yersinia pseudotuberculosis serotype O:1b (strain IP 31758).